We begin with the raw amino-acid sequence, 370 residues long: Mitogen-activated protein kinase 3 (370 aa).

Residues arginine 38–leucine 324 enclose the Protein kinase domain. Residues isoleucine 44–valine 52 and lysine 67 contribute to the ATP site. Aspartate 164 acts as the Proton acceptor in catalysis. Threonine 196 is subject to Phosphothreonine. Positions threonine 196–tyrosine 198 match the TXY motif. A Phosphotyrosine modification is found at tyrosine 198. At threonine 201 the chain carries Phosphothreonine.

It belongs to the protein kinase superfamily. CMGC Ser/Thr protein kinase family. MAP kinase subfamily. Interacts with DSPTP1B/MKP2, NDPK2 and VIP1. The interaction with DSPTP1B/MKP2 is repressed by fungal elicitation. Binds to LIP5. Interacts with VQ4. Interacts with RACK1A, RACK1B and RACK1C. Interacts with FLZ9. Interacts with MKK5. Dually phosphorylated on Thr-196 and Tyr-198, which activates the enzyme. Dephosphorylated by DSPTP1B/MKP2.

It is found in the cytoplasm. Its subcellular location is the nucleus. The protein resides in the cell cortex. The enzyme catalyses L-seryl-[protein] + ATP = O-phospho-L-seryl-[protein] + ADP + H(+). It carries out the reaction L-threonyl-[protein] + ATP = O-phospho-L-threonyl-[protein] + ADP + H(+). Its activity is regulated as follows. Activated by threonine and tyrosine phosphorylation. Activated by MAP kinase kinases MKK4, MKK5, MKK7 and MKK9. Activated in response to hydrogen peroxide, ozone, salt stress and flagellin bacterial elicitor. Triggered by Agrobacterium upon T-DNA transfer. Repressed by DSPTP1B/MKP2-mediated dephosphorylation. Functionally, involved in oxidative stress-mediated signaling cascade (such as ozone). Involved in the innate immune MAP kinase signaling cascade (MEKK1, MKK4/MKK5 and MPK3/MPK6) downstream of bacterial flagellin receptor FLS2. May be involved in hypersensitive response (HR)-mediated signaling cascade by modulating LIP5 phosphorylation and subsequent multivesicular bodies (MVBs) trafficking. May phosphorylate regulators of WRKY transcription factors. Mediates the phosphorylation of VIP1 and subsequent stress genes transcription in response to Agrobacterium. MKK9-MPK3/MPK6 module phosphorylates and activates EIN3, leading to the promotion of EIN3-mediated transcription in ethylene signaling. MPK3/MPK6 cascade regulates camalexin synthesis through transcriptional regulation of the biosynthetic genes after pathogen infection. YDA-MKK4/MKK5-MPK3/MPK6 module regulates stomatal cell fate before the guard mother cell (GMC) is specified. When activated, reinforces the feedback loop by phosphorylating BASL, and inhibits stomatal fate by phosphorylating SPCH. This MAPK cascade also functions downstream of the ER receptor in regulating coordinated local cell proliferation, which shapes the morphology of plant organs. This Arabidopsis thaliana (Mouse-ear cress) protein is Mitogen-activated protein kinase 3.